Reading from the N-terminus, the 326-residue chain is MLTFARQQQRRNVRWLLSLSLLVLLATLLSLCAGEQWIAPGDWLSARGELFVWQIRLPRTLAVLLVGAALALSGAVMQALFENPLAEPGLLGVSNGAGVGLIAAVLLGQGQLPGWALGLCAIAGALIITLILLRFARRHLSTSRLLLAGVALGIICSALMTWAIYFSTSFDLRQLMYWMMGGFGGVDWQQSWLMIALIPVLIWICCQSQPLNMLALGETSARQLGLPLWLWRNLLVIATGWMVGVSVAMAGAIGFIGLVIPHILRLCGLTDHRVLLPGCALAGAIALLLADVVARLALASAELPIGVVTATLGAPVFIWLLLKSAR.

Transmembrane regions (helical) follow at residues 17 to 39 (LSLS…QWIA), 59 to 81 (RTLA…QALF), 88 to 107 (PGLL…AVLL), 111 to 133 (QLPG…LILL), 146 to 168 (LLAG…YFST), 188 to 205 (WQQS…IWIC), 242 to 264 (MVGV…PHIL), 274 to 296 (VLLP…VARL), and 303 to 322 (LPIG…WLLL).

This sequence belongs to the binding-protein-dependent transport system permease family. FecCD subfamily. The complex is composed of two ATP-binding proteins (BtuD), two transmembrane proteins (BtuC) and a solute-binding protein (BtuF).

Its subcellular location is the cell inner membrane. In terms of biological role, part of the ABC transporter complex BtuCDF involved in vitamin B12 import. Involved in the translocation of the substrate across the membrane. The protein is Vitamin B12 import system permease protein BtuC of Salmonella typhi.